We begin with the raw amino-acid sequence, 473 residues long: Myocyte-specific enhancer factor 2C (473 aa).

The MADS-box domain occupies 3-57; sequence RKKIQITRIMDERNRQVTFTKRKFGLMKKAYELSVLCDCEIALIIFNSTNKLFQY. Lys-4 carries the N6-acetyllysine modification. A DNA-binding region (mef2-type) is located at residues 58-86; sequence ASTDMDKVLLKYTEYNEPHESRTNSDIVE. Ser-59 bears the Phosphoserine; by CK2 mark. The interval 91-116 is disordered; sequence KGLNGCDSPDPDADDSVGHSPESEDK. Residues Ser-98, Ser-106, and Ser-110 each carry the phosphoserine modification. 2 positions are modified to N6-acetyllysine: Lys-116 and Lys-119. Residues 180–224 are disordered; the sequence is NSMSPGVTHRPPSAGNTGGLMGGDLTSGAGTSAGNGYGNPRNSPG. Ser-222 and Ser-228 each carry phosphoserine. Residues Lys-234 and Lys-239 each carry the N6-acetyllysine modification. Ser-240 bears the Phosphoserine mark. Lys-252 and Lys-264 each carry N6-acetyllysine. Positions 271-278 are beta domain; that stretch reads SEDVDLLL. A phosphothreonine; by MAPK14 mark is found at Thr-293 and Thr-300. A transcription repressor region spans residues 368–399; that stretch reads ACTSTHLSQSSNLSLPSTQSLNIKSEPVSPPR. Over residues 375–390 the composition is skewed to polar residues; the sequence is SQSSNLSLPSTQSLNI. Residues 375-473 form a disordered region; sequence SQSSNLSLPS…RMRLSEGWAT (99 aa). Residue Lys-391 forms a Glycyl lysine isopeptide (Lys-Gly) (interchain with G-Cter in SUMO) linkage. The residue at position 396 (Ser-396) is a Phosphoserine; by CDK5. Residue Ser-419 is modified to Phosphoserine; by MAPK7. A compositionally biased stretch (low complexity) spans 419-432; sequence SPVDSLSSCSSSYD. Basic and acidic residues predominate over residues 433–443; the sequence is GSDREDHRNEF. At Ser-445 the chain carries Phosphoserine.

It belongs to the MEF2 family. Forms a complex with class II HDACs in undifferentiating cells. On myogenic differentiation, HDACs are released into the cytoplasm allowing MEF2s to interact with other proteins for activation. Interacts with EP300 in differentiating cells; the interaction acetylates MEF2C leading to increased DNA binding and activation. Interacts with HDAC7 and CARM1. Interacts with HDAC4 and HDAC9; the interaction with HDACs represses transcriptional activity. Interacts with LPIN1. Interacts with MYOCD. Interacts with AKAP13. Interacts with FOXK1; the interaction inhibits MEF2C transactivation activity. Interacts (via N-terminus) with HABP4; this interaction decreases DNA-binding activity of MEF2C in myocardial cells in response to mechanical stress. Interacts with JPH2; interaction specifically takes place with the Junctophilin-2 N-terminal fragment cleavage product of JPH2. Interacts (via MADS box) with SOX18. Interacts with PHF7; the interaction promotes MEF2C binding to its transcription targets. Post-translationally, phosphorylation on Ser-59 enhances DNA binding activity. Phosphorylation on Ser-396 is required for Lys-391 sumoylation and inhibits transcriptional activity. In terms of processing, acetylated by p300 on several sites in diffentiating myocytes. Acetylation on Lys-4 increases DNA binding and transactivation. Sumoylated on Lys-391 with SUMO2 but not by SUMO1 represses transcriptional activity. Post-translationally, proteolytically cleaved in cerebellar granule neurons, probably by caspase 7, following neurotoxicity. Preferentially cleaves the CDK5-mediated hyperphosphorylated form which leads to neuron apoptosis and transcriptional inactivation. Expressed in brain and skeletal muscle.

It is found in the nucleus. It localises to the cytoplasm. Its subcellular location is the sarcoplasm. Functionally, transcription activator which binds specifically to the MEF2 element present in the regulatory regions of many muscle-specific genes. Controls cardiac morphogenesis and myogenesis, and is also involved in vascular development. Enhances transcriptional activation mediated by SOX18. Plays an essential role in hippocampal-dependent learning and memory by suppressing the number of excitatory synapses and thus regulating basal and evoked synaptic transmission. Crucial for normal neuronal development, distribution, and electrical activity in the neocortex. Necessary for proper development of megakaryocytes and platelets and for bone marrow B-lymphopoiesis. Required for B-cell survival and proliferation in response to BCR stimulation, efficient IgG1 antibody responses to T-cell-dependent antigens and for normal induction of germinal center B-cells. May also be involved in neurogenesis and in the development of cortical architecture. Isoforms that lack the repressor domain are more active than isoform 1. This chain is Myocyte-specific enhancer factor 2C, found in Homo sapiens (Human).